Here is a 446-residue protein sequence, read N- to C-terminus: Tol-Pal system protein TolB (446 aa).

The signal sequence occupies residues 1 to 36; the sequence is MMDVQTVRRGNAVQSLMSKLILPLVMAVAFALPARA. Residues 424-446 form a disordered region; the sequence is GYNERPSPTPTFASDPAWSPRIQ.

It belongs to the TolB family. The Tol-Pal system is composed of five core proteins: the inner membrane proteins TolA, TolQ and TolR, the periplasmic protein TolB and the outer membrane protein Pal. They form a network linking the inner and outer membranes and the peptidoglycan layer.

The protein localises to the periplasm. Part of the Tol-Pal system, which plays a role in outer membrane invagination during cell division and is important for maintaining outer membrane integrity. In Parvibaculum lavamentivorans (strain DS-1 / DSM 13023 / NCIMB 13966), this protein is Tol-Pal system protein TolB.